Reading from the N-terminus, the 194-residue chain is Leucyl/phenylalanyl-tRNA--protein transferase (194 aa).

This sequence belongs to the L/F-transferase family.

It is found in the cytoplasm. It carries out the reaction N-terminal L-lysyl-[protein] + L-leucyl-tRNA(Leu) = N-terminal L-leucyl-L-lysyl-[protein] + tRNA(Leu) + H(+). The catalysed reaction is N-terminal L-arginyl-[protein] + L-leucyl-tRNA(Leu) = N-terminal L-leucyl-L-arginyl-[protein] + tRNA(Leu) + H(+). The enzyme catalyses L-phenylalanyl-tRNA(Phe) + an N-terminal L-alpha-aminoacyl-[protein] = an N-terminal L-phenylalanyl-L-alpha-aminoacyl-[protein] + tRNA(Phe). Its function is as follows. Functions in the N-end rule pathway of protein degradation where it conjugates Leu, Phe and, less efficiently, Met from aminoacyl-tRNAs to the N-termini of proteins containing an N-terminal arginine or lysine. This is Leucyl/phenylalanyl-tRNA--protein transferase from Chlorobium luteolum (strain DSM 273 / BCRC 81028 / 2530) (Pelodictyon luteolum).